A 255-amino-acid polypeptide reads, in one-letter code: tRNA pseudouridine synthase A (255 aa).

Asp52 acts as the Nucleophile in catalysis. Tyr111 is a substrate binding site.

This sequence belongs to the tRNA pseudouridine synthase TruA family. As to quaternary structure, homodimer.

It carries out the reaction uridine(38/39/40) in tRNA = pseudouridine(38/39/40) in tRNA. In terms of biological role, formation of pseudouridine at positions 38, 39 and 40 in the anticodon stem and loop of transfer RNAs. The chain is tRNA pseudouridine synthase A from Nitrobacter winogradskyi (strain ATCC 25391 / DSM 10237 / CIP 104748 / NCIMB 11846 / Nb-255).